Reading from the N-terminus, the 214-residue chain is Phosphoheptose isomerase (214 aa).

The region spanning 51 to 209 is the SIS domain; sequence IASTFEDGGK…IDLVERLLGY (159 aa). 66-68 is a binding site for substrate; it reads NGG. His-75 and Glu-79 together coordinate Zn(2+). Substrate is bound by residues Glu-79, 110–111, 136–138, Ser-141, and Gln-189; these read ND and STS. Positions 189 and 197 each coordinate Zn(2+).

This sequence belongs to the SIS family. GmhA subfamily. Zn(2+) is required as a cofactor.

It is found in the cytoplasm. It carries out the reaction 2 D-sedoheptulose 7-phosphate = D-glycero-alpha-D-manno-heptose 7-phosphate + D-glycero-beta-D-manno-heptose 7-phosphate. It functions in the pathway carbohydrate biosynthesis; D-glycero-D-manno-heptose 7-phosphate biosynthesis; D-glycero-alpha-D-manno-heptose 7-phosphate and D-glycero-beta-D-manno-heptose 7-phosphate from sedoheptulose 7-phosphate: step 1/1. Its function is as follows. Catalyzes the isomerization of sedoheptulose 7-phosphate in D-glycero-D-manno-heptose 7-phosphate. The polypeptide is Phosphoheptose isomerase (Chlorobium limicola (strain DSM 245 / NBRC 103803 / 6330)).